Consider the following 59-residue polypeptide: Large ribosomal subunit protein bL32 (59 aa).

Residues 1–59 form a disordered region; sequence MAVQQNRKSRSRRGMRRSHDALSSAALSIDPTTGEKHRRHHVTPDGFYRGKKVVEVSQD. Basic residues predominate over residues 7–16; the sequence is RKSRSRRGMR.

Belongs to the bacterial ribosomal protein bL32 family.

This chain is Large ribosomal subunit protein bL32, found in Hahella chejuensis (strain KCTC 2396).